Here is a 105-residue protein sequence, read N- to C-terminus: Nucleoid-associated protein EAT1b_1710 (105 aa).

Low complexity predominate over residues 1–16; it reads MRGMGNMNNMMKQMQK. Positions 1–26 are disordered; the sequence is MRGMGNMNNMMKQMQKMQKDMAKAQE. The span at 17 to 26 shows a compositional bias: basic and acidic residues; it reads MQKDMAKAQE.

It belongs to the YbaB/EbfC family. Homodimer.

It localises to the cytoplasm. The protein localises to the nucleoid. Its function is as follows. Binds to DNA and alters its conformation. May be involved in regulation of gene expression, nucleoid organization and DNA protection. The chain is Nucleoid-associated protein EAT1b_1710 from Exiguobacterium sp. (strain ATCC BAA-1283 / AT1b).